The sequence spans 720 residues: Cyclopenase penL (720 aa).

The Cu cation site is built by His-137, His-141, and His-313.

The protein belongs to the tyrosinase family. The cofactor is Cu(2+).

The catalysed reaction is (-)-cyclopenine = viridicatin + methyl isocyanate + H(+). The enzyme catalyses (-)-4'-methoxycyclopenine = 4'-methoxyviridicatin + methyl isocyanate + H(+). It participates in secondary metabolite biosynthesis. It functions in the pathway alkaloid biosynthesis. The protein operates within mycotoxin biosynthesis. In terms of biological role, cyclopenase; part of the gene cluster that mediates the biosynthesis of penigequinolones, potent insecticidal alkaloids that contain a highly modified 10-carbon prenyl group. The first stage is catalyzed by the nonribosomal peptide synthetase penN that condenses anthranilic acid and O-methyl-L-tyrosine to produce 4'-methoxycyclopeptin. 4'-methoxycyclopeptin is then converted to 4'-methoxydehydrocyclopeptin by the ketoglutarate-dependent dioxygenase penM through dehydrogenation to form a double bond between C-alpha and C-beta of the O-methyltyrosine side chain. PenM also converts its first product methoxydehydrocyclopeptin to 4'-methoxycyclopenin. The following conversion of 4'methoxycyclopenin into 4'-methoxyviridicatin is catalyzed by the cyclopenase penL. 4'-methoxyviridicatin is the precursor of quinolone natural products, and is further converted to quinolinone B. The prenyltransferase penI then catalyzes the canonical Friedel-Crafts alkylation of quinolinone B with dimethylallyl cation to yield dimethylallyl quinolone, which is subjected to FAD-dependent dehydrogenation by the FAD-linked oxidoreductase penH to yield conjugated aryl diene. The delta(3') double bond then serves as the site of the second alkylation with DMAPP catalyzed by the prenyltransferase penG to yield a carbenium ion intermediate, which can be attacked by H(2)O to yield a styrenyl quinolone containing a C3'-hydroxyprenyl chain, or undergo cyclization to yield yaequinolones J1 and J2. The conversion of the styrenyl quinolone into the tetrahydrofuran-containing yaequinolone C is performed by the FAD-dependent monooxygenase penE and involves epoxidation of the terminal C7'-C8' olefin, followed by epoxide ring opening initiated by the C3' hydroxyl group. The predicted cysteine hydrolase penJ acts as an epoxide hydrolase that enhances the rate of the 5-exo-tet cyclization step, increasing the yield of yaequinolone C. PenF catalyzes the cationic rearrangement of the epoxide formed by penE (before ring opening to produce yaequinolone C) into yaequinolone D. Finally, the short-chain dehydrogenase/reductase (SDR)-like reductase penD, catalyzes both the dehydration of yaequinolone D and the reduction of the resulting oxonium to yield penigequinolone. This chain is Cyclopenase penL, found in Penicillium thymicola.